Here is a 276-residue protein sequence, read N- to C-terminus: Homeobox-leucine zipper protein HOX22 (276 aa).

Positions 70 to 130 (AGERKRRFTE…NKRARWRSKQ (61 aa)) form a DNA-binding region, homeobox. Residues 129–173 (KQLEHDYAALRSKYDALHSRVESLKQEKLALTVQLHELRERLRER) are leucine-zipper. The interval 170-212 (LREREERSGNGGAATTAASSSSCNGSGSEEVDDDDDKRNAAAG) is disordered. Residues 182 to 197 (AATTAASSSSCNGSGS) show a composition bias toward low complexity.

It belongs to the HD-ZIP homeobox family. Class I subfamily. In terms of tissue distribution, expressed in seedlings, roots, stems, leaf sheaths and blades and panicles.

The protein localises to the nucleus. Functionally, probable transcription factor. The protein is Homeobox-leucine zipper protein HOX22 (HOX22) of Oryza sativa subsp. japonica (Rice).